The chain runs to 893 residues: Alanine--tRNA ligase (893 aa).

This sequence belongs to the class-II aminoacyl-tRNA synthetase family.

The protein resides in the cytoplasm. The catalysed reaction is tRNA(Ala) + L-alanine + ATP = L-alanyl-tRNA(Ala) + AMP + diphosphate. Its function is as follows. Catalyzes the attachment of alanine to tRNA(Ala) in a two-step reaction: alanine is first activated by ATP to form Ala-AMP and then transferred to the acceptor end of tRNA(Ala). Also edits incorrectly charged Ser-tRNA(Ala) and Gly-tRNA(Ala) via its editing domain. This Leuconostoc mesenteroides subsp. mesenteroides (strain ATCC 8293 / DSM 20343 / BCRC 11652 / CCM 1803 / JCM 6124 / NCDO 523 / NBRC 100496 / NCIMB 8023 / NCTC 12954 / NRRL B-1118 / 37Y) protein is Alanine--tRNA ligase (alaS).